Consider the following 500-residue polypeptide: Neuronal acetylcholine receptor subunit beta-2 (500 aa).

Positions 1–24 (MAGHSNSMALFSFSLLWLCSGVLG) are cleaved as a signal peptide. Over 25-237 (TDTEERLVEH…IIRRKPLFYT (213 aa)) the chain is Extracellular. Residues Asn-50 and Asn-167 are each glycosylated (N-linked (GlcNAc...) asparagine). Cys-154 and Cys-168 form a disulfide bridge. The chain crosses the membrane as a helical span at residues 238–258 (INLIIPCVLITSLAILVFYLP). Topologically, residues 259 to 266 (SDCGEKMT) are cytoplasmic. A helical transmembrane segment spans residues 267 to 287 (LCISVLLALTVFLLLISKIVP). At 288–299 (PTSLDVPLVGKY) the chain is on the extracellular side. The chain crosses the membrane as a helical span at residues 300–320 (LMFTMVLVTFSIVTSVCVLNV). Residues 321-458 (HHRSPTTHTM…WKYVAMVIDR (138 aa)) lie on the Cytoplasmic side of the membrane. A helical transmembrane segment spans residues 459-479 (LFLWIFVFVCVFGTVGMFLQP).

This sequence belongs to the ligand-gated ion channel (TC 1.A.9) family. Acetylcholine receptor (TC 1.A.9.1) subfamily. Beta-2/CHRNB2 sub-subfamily. Neuronal AChR is a heteropentamer composed of two different types of subunits: alpha and beta. CHRNB2/Beta-2 subunit can be combined to CHRNA2/alpha-2, CHRNA3/alpha-3 or CHRNA4/alpha-4, CHRNA5/alpha-5, CHRNA6/alpha-6 and CHRNB3/beta-3 to give rise to functional receptors. CHRNA2:CHRNB2 and CHRNA4:CHRNB2 nAChR complexes exist in two subtypes: LS (low agonist sensitivity) with a (CHRNA2/4)3:(CHRNB2)2 and HS (high agonist sensitivity) with a (CHRNA2/4)2:(CHRNB2)3 stoichiometry; the subtypes differ in their subunit binding interfaces which are involved in ligand binding. Cells produce predominantly an (CHRNA4)3:(CHRNB2)2 nAChR. The stoichiometric form (CHRNA4)2:(CHRNB2)3 expression is selectively up-regulated by nicotine and has lower single channel conductance and calcium permeability. Also part of the stoichiometric forms: (CHRNA4:CHRNB2)2:CHRNB3 or (CHRNA6:CHRNB2)2:CHRNB3. Can form heteropentamers with CHRNA7, mainly found in basal forebrain cholinergic neurons. Interacts with RIC3; which is required for proper folding and assembly. Interacts with LYPD6. In terms of tissue distribution, expressed in most regions of the CNS.

It localises to the synaptic cell membrane. It is found in the cell membrane. The enzyme catalyses Ca(2+)(in) = Ca(2+)(out). It carries out the reaction K(+)(in) = K(+)(out). It catalyses the reaction Na(+)(in) = Na(+)(out). Its activity is regulated as follows. Activated by a myriad of ligands such as acetylcholine, cytisine, nicotine, choline and epibatidine. Channel potentiation by calcium is stoichiometry-selective, CHRNA4:CHRNB2 nACh receptor is achieved by calcium association with topographically distinct sites framed by anionic residues within the CHRNA4 subunit and between the CHRNA4 and CHRNB2 subunits. Oligomeric amyloid-beta protein 42 activates specifially CHRNA7:CHRNB2 nAchRs. nAChR activity is inhibited by the antagonist alpha-conotoxins BuIA, PnIA, PnIC, GID and MII, small disulfide-constrained peptides from cone snails. Its function is as follows. Component of neuronal acetylcholine receptors (nAChRs) that function as pentameric, ligand-gated cation channels with high calcium permeability among other activities. nAChRs are excitatory neurotrasnmitter receptors formed by a collection of nAChR subunits known to mediate synaptic transmission in the nervous system and the neuromuscular junction. Each nAchR subunit confers differential attributes to channel properties, including activation, deactivation and desensitization kinetics, pH sensitivity, cation permeability, and binding to allosteric modulators. CHRNB2 forms heteropentameric neuronal acetylcholine receptors with CHRNA2, CHRNA3, CHRNA4 and CHRNA6, as well as CHRNA5 and CHRNB3 as accesory subunits. Found in two major stoichiometric forms,(CHRNA4)3:(CHRNB2)2 and (CHRNA4)2:(CHRNB2)3, the two stoichiometric forms differ in their unitary conductance, calcium permeability, ACh sensitivity and potentiation by divalent cation. Heteropentameric channels with CHRNA6 and CHRNA4 exhibit high sensitivity to ACh and nicotine and are predominantly expressed in only a few brain areas, including dopaminergic neurons, norepirephrine neurons and cells of the visual system. nAChrs containing CHRNA6 subunits mediate endogenous cholinergic modulation of dopamine and gamma-aminobutyric acid (GABA) release in response to nicotine at nerve terminals. Also forms functional nAChRs with other subunits such as CHRNA7:CHRNB2, mainly expressed in basal forebrain cholinergic neurons. The polypeptide is Neuronal acetylcholine receptor subunit beta-2 (Chrnb2) (Rattus norvegicus (Rat)).